We begin with the raw amino-acid sequence, 329 residues long: MKAAITATANYLPPDILSNHDLELMLDTNDEWIRSRTGIGERRILKDPTKATSYMCGEVARQLLEKRQLAATDIELIIVATITPDMPFPATACLVQDLIGAKNAWAFDLNAACSGFLYALNTAIRFVESGAHKKVMVIGADKMSSIIDYTDRATAILFGDGAGGVLVEPAADDSCGVLDVRLYSDGTNGRERLLMTGGGSRYPASHETVDKKMHYIYQDGRQVFKAAVTAMADVATEIMQRNNLTADDVAYLVPHQANQRIIDAIAERMGVDRAKVVSNVGYYGNTTAGTIPICLAELDANNKLKHGDNLVLVSFGAGYTWGGIYVKWQ.

Catalysis depends on residues cysteine 113 and histidine 255. Residues 256 to 260 (QANQR) are ACP-binding. Asparagine 285 is an active-site residue.

Belongs to the thiolase-like superfamily. FabH family. As to quaternary structure, homodimer.

It is found in the cytoplasm. It carries out the reaction malonyl-[ACP] + acetyl-CoA + H(+) = 3-oxobutanoyl-[ACP] + CO2 + CoA. It functions in the pathway lipid metabolism; fatty acid biosynthesis. In terms of biological role, catalyzes the condensation reaction of fatty acid synthesis by the addition to an acyl acceptor of two carbons from malonyl-ACP. Catalyzes the first condensation reaction which initiates fatty acid synthesis and may therefore play a role in governing the total rate of fatty acid production. Possesses both acetoacetyl-ACP synthase and acetyl transacylase activities. Its substrate specificity determines the biosynthesis of branched-chain and/or straight-chain of fatty acids. This chain is Beta-ketoacyl-[acyl-carrier-protein] synthase III, found in Chlorobium chlorochromatii (strain CaD3).